The chain runs to 138 residues: MSQTVLAFDFGTNSIGCAVGQSITGTAQGLPAFKAQDGIPNWEQIGKVIAQWQPDLLVVGLPLNMDGTEQPLTQRAKKFANRLNGRFNLPVELQDERLTTVEAKSEIFARGGFKALKKGKVDAISACLILESWFEQQS.

This sequence belongs to the YqgF nuclease family.

It is found in the cytoplasm. In terms of biological role, could be a nuclease involved in processing of the 5'-end of pre-16S rRNA. This Glaesserella parasuis serovar 5 (strain SH0165) (Haemophilus parasuis) protein is Putative pre-16S rRNA nuclease.